We begin with the raw amino-acid sequence, 75 residues long: Small ribosomal subunit protein bS18 (75 aa).

The protein belongs to the bacterial ribosomal protein bS18 family. Part of the 30S ribosomal subunit. Forms a tight heterodimer with protein bS6.

Binds as a heterodimer with protein bS6 to the central domain of the 16S rRNA, where it helps stabilize the platform of the 30S subunit. This is Small ribosomal subunit protein bS18 from Laribacter hongkongensis (strain HLHK9).